A 131-amino-acid polypeptide reads, in one-letter code: Lysosomal enzyme trafficking factor (131 aa).

The next 2 helical transmembrane spans lie at 8–28 and 66–86; these read MGWIGVSLYLFVSAAAFYYVF and LPFWLWAALFLIPYFQVFLFL.

This sequence belongs to the LYSET family.

It is found in the golgi apparatus membrane. Required for mannose-6-phosphate-dependent trafficking of lysosomal enzymes. LYSET bridges GlcNAc-1-phosphate transferase (GNPTAB), to the membrane-bound transcription factor site-1 protease (MBTPS1), thus allowing proteolytic activation of the GNPTAB. GNPTAB is involved in the regulation of M6P-dependent Golgi-to-lysosome trafficking of lysosomal enzymes. LYSET is thus an essential factor for maturation and delivery of lysosomal hydrolases. This Xenopus laevis (African clawed frog) protein is Lysosomal enzyme trafficking factor (lyset-b).